The sequence spans 657 residues: Heat shock protein hsp-6 (657 aa).

Residues 1–27 constitute a mitochondrion transit peptide; sequence MLSARSFLSSARTIARSSLMSARSLSD. The segment at 637–657 is disordered; sequence KNSGGDAQEAKTAEEPKKEQN. Over residues 644–657 the composition is skewed to basic and acidic residues; sequence QEAKTAEEPKKEQN.

Belongs to the heat shock protein 70 family.

The protein localises to the mitochondrion. The protein is Heat shock protein hsp-6 of Caenorhabditis elegans.